Here is a 491-residue protein sequence, read N- to C-terminus: Ketol-acid reductoisomerase (NADP(+)) (491 aa).

Positions 15–208 (AQLGKCRFMG…GGHRAGVLES (194 aa)) constitute a KARI N-terminal Rossmann domain. Residues 45 to 48 (CGAQ), R68, R76, S78, and 108 to 110 (DKQ) each bind NADP(+). Residue H132 is part of the active site. G158 contributes to the NADP(+) binding site. 2 consecutive KARI C-terminal knotted domains span residues 209 to 344 (SFVA…TAPQ) and 345 to 484 (YEGK…MTDM). Residues D217, E221, E389, and E393 each contribute to the Mg(2+) site. S414 serves as a coordination point for substrate.

This sequence belongs to the ketol-acid reductoisomerase family. Requires Mg(2+) as cofactor.

It carries out the reaction (2R)-2,3-dihydroxy-3-methylbutanoate + NADP(+) = (2S)-2-acetolactate + NADPH + H(+). It catalyses the reaction (2R,3R)-2,3-dihydroxy-3-methylpentanoate + NADP(+) = (S)-2-ethyl-2-hydroxy-3-oxobutanoate + NADPH + H(+). Its pathway is amino-acid biosynthesis; L-isoleucine biosynthesis; L-isoleucine from 2-oxobutanoate: step 2/4. It participates in amino-acid biosynthesis; L-valine biosynthesis; L-valine from pyruvate: step 2/4. Functionally, involved in the biosynthesis of branched-chain amino acids (BCAA). Catalyzes an alkyl-migration followed by a ketol-acid reduction of (S)-2-acetolactate (S2AL) to yield (R)-2,3-dihydroxy-isovalerate. In the isomerase reaction, S2AL is rearranged via a Mg-dependent methyl migration to produce 3-hydroxy-3-methyl-2-ketobutyrate (HMKB). In the reductase reaction, this 2-ketoacid undergoes a metal-dependent reduction by NADPH to yield (R)-2,3-dihydroxy-isovalerate. The chain is Ketol-acid reductoisomerase (NADP(+)) from Escherichia coli O157:H7.